The chain runs to 286 residues: Transcription factor MYB62 (286 aa).

2 consecutive HTH myb-type domains span residues 16–68 (DEEL…LNYL) and 69–123 (KPDI…QKQA). DNA-binding regions (H-T-H motif) lie at residues 44 to 68 (WNHV…LNYL) and 96 to 119 (WSKI…RTRV).

As to expression, expressed in leaves and flowers.

Its subcellular location is the nucleus. In terms of biological role, transcription repressor of phosphate (Pi) starvation-induced genes. Negatively regulates Pi starvation responses via the repression of gibberellic acid (GA) biosynthesis and signaling. Modulates root architecture, phosphatase activity, and Pi uptake and accumulation. The chain is Transcription factor MYB62 from Arabidopsis thaliana (Mouse-ear cress).